Reading from the N-terminus, the 284-residue chain is 2,3,4,5-tetrahydropyridine-2,6-dicarboxylate N-succinyltransferase (284 aa).

Residues Arg111 and Asp148 each coordinate substrate.

It belongs to the transferase hexapeptide repeat family. Homotrimer.

It localises to the cytoplasm. It carries out the reaction (S)-2,3,4,5-tetrahydrodipicolinate + succinyl-CoA + H2O = (S)-2-succinylamino-6-oxoheptanedioate + CoA. It participates in amino-acid biosynthesis; L-lysine biosynthesis via DAP pathway; LL-2,6-diaminopimelate from (S)-tetrahydrodipicolinate (succinylase route): step 1/3. This chain is 2,3,4,5-tetrahydropyridine-2,6-dicarboxylate N-succinyltransferase, found in Ehrlichia ruminantium (strain Gardel).